The sequence spans 196 residues: Orotate phosphoribosyltransferase (196 aa).

117–125 (EDVVTTGLS) is a 5-phospho-alpha-D-ribose 1-diphosphate binding site. Orotate is bound by residues threonine 121 and arginine 149.

This sequence belongs to the purine/pyrimidine phosphoribosyltransferase family. PyrE subfamily. Homodimer. Mg(2+) is required as a cofactor.

The enzyme catalyses orotidine 5'-phosphate + diphosphate = orotate + 5-phospho-alpha-D-ribose 1-diphosphate. It functions in the pathway pyrimidine metabolism; UMP biosynthesis via de novo pathway; UMP from orotate: step 1/2. Catalyzes the transfer of a ribosyl phosphate group from 5-phosphoribose 1-diphosphate to orotate, leading to the formation of orotidine monophosphate (OMP). The sequence is that of Orotate phosphoribosyltransferase from Rhizorhabdus wittichii (strain DSM 6014 / CCUG 31198 / JCM 15750 / NBRC 105917 / EY 4224 / RW1) (Sphingomonas wittichii).